Consider the following 298-residue polypeptide: Lipoyl synthase (298 aa).

Residues C40, C45, C51, C67, C71, C74, and S280 each contribute to the [4Fe-4S] cluster site. Positions 53-269 (AVRKTATFMI…KEIALSKGFS (217 aa)) constitute a Radical SAM core domain.

Belongs to the radical SAM superfamily. Lipoyl synthase family. [4Fe-4S] cluster serves as cofactor.

It localises to the cytoplasm. It catalyses the reaction [[Fe-S] cluster scaffold protein carrying a second [4Fe-4S](2+) cluster] + N(6)-octanoyl-L-lysyl-[protein] + 2 oxidized [2Fe-2S]-[ferredoxin] + 2 S-adenosyl-L-methionine + 4 H(+) = [[Fe-S] cluster scaffold protein] + N(6)-[(R)-dihydrolipoyl]-L-lysyl-[protein] + 4 Fe(3+) + 2 hydrogen sulfide + 2 5'-deoxyadenosine + 2 L-methionine + 2 reduced [2Fe-2S]-[ferredoxin]. It participates in protein modification; protein lipoylation via endogenous pathway; protein N(6)-(lipoyl)lysine from octanoyl-[acyl-carrier-protein]. Its function is as follows. Catalyzes the radical-mediated insertion of two sulfur atoms into the C-6 and C-8 positions of the octanoyl moiety bound to the lipoyl domains of lipoate-dependent enzymes, thereby converting the octanoylated domains into lipoylated derivatives. The polypeptide is Lipoyl synthase (Bacillus cytotoxicus (strain DSM 22905 / CIP 110041 / 391-98 / NVH 391-98)).